The sequence spans 65 residues: Large ribosomal subunit protein bL35 (65 aa).

This sequence belongs to the bacterial ribosomal protein bL35 family.

The polypeptide is Large ribosomal subunit protein bL35 (Stenotrophomonas maltophilia (strain R551-3)).